A 148-amino-acid polypeptide reads, in one-letter code: Large ribosomal subunit protein bL9 (148 aa).

This sequence belongs to the bacterial ribosomal protein bL9 family.

Functionally, binds to the 23S rRNA. This chain is Large ribosomal subunit protein bL9, found in Sulfurimonas denitrificans (strain ATCC 33889 / DSM 1251) (Thiomicrospira denitrificans (strain ATCC 33889 / DSM 1251)).